The chain runs to 93 residues: UPF0147 protein MM_1385 (93 aa).

This sequence belongs to the UPF0147 family.

This is UPF0147 protein MM_1385 from Methanosarcina mazei (strain ATCC BAA-159 / DSM 3647 / Goe1 / Go1 / JCM 11833 / OCM 88) (Methanosarcina frisia).